The primary structure comprises 311 residues: F-box protein At3g18320 (311 aa).

The F-box domain maps to 1–46 (MTLPELPKDLVEEILCFVPATSLKRLRSTCKGWNRLFKDDKRFARK).

This chain is F-box protein At3g18320, found in Arabidopsis thaliana (Mouse-ear cress).